A 140-amino-acid chain; its full sequence is MSIMQVEVVSSEQNIYSGEASFVVVPTVQGELGIYPRHEPIMSLVRPGALRLTVPGEDKEVLVAVSGGVLEVQPDKVTVLADVAVRSAEMDQARAEEAKKAAEAGISQAKDDKALAEAHKALAAAIAQLKTLDYIRSHKK.

This sequence belongs to the ATPase epsilon chain family. In terms of assembly, F-type ATPases have 2 components, CF(1) - the catalytic core - and CF(0) - the membrane proton channel. CF(1) has five subunits: alpha(3), beta(3), gamma(1), delta(1), epsilon(1). CF(0) has three main subunits: a, b and c.

It is found in the cell inner membrane. Its function is as follows. Produces ATP from ADP in the presence of a proton gradient across the membrane. This is ATP synthase epsilon chain from Neisseria meningitidis serogroup C / serotype 2a (strain ATCC 700532 / DSM 15464 / FAM18).